A 184-amino-acid polypeptide reads, in one-letter code: Large ribosomal subunit protein uL22 (184 aa).

The tract at residues 160 to 184 (PEEEVAQKKKISQKKLKKQKLMARE) is disordered. Positions 167 to 184 (KKKISQKKLKKQKLMARE) are enriched in basic residues.

The protein belongs to the universal ribosomal protein uL22 family. In terms of assembly, component of the large ribosomal subunit. As to expression, expressed in pancreas, lung, colon, cystic duct, gall bladder, kidney and liver. Expressed at high levels in the well differentiated pancreatic tumor cell lines HPAF, COLO 357 and Capan-1, the moderately differentiated pancreatic tumor cell lines T3M-4, AsPc-1 and BxPc-3, the poorly differentiated pancreatic tumor cell line MIA PaCa-2, and the pancreatic tumor cell lines of undefined differentiation status such as SW979. Expressed at lower levels in the poorly differentiated pancreatic tumor cell lines HCG-25 and PANC-1.

It is found in the cytoplasm. Component of the large ribosomal subunit. The ribosome is a large ribonucleoprotein complex responsible for the synthesis of proteins in the cell. The chain is Large ribosomal subunit protein uL22 (RPL17) from Homo sapiens (Human).